A 264-amino-acid chain; its full sequence is Thymidylate synthase (264 aa).

R21 lines the dUMP pocket. (6R)-5,10-methylene-5,6,7,8-tetrahydrofolate is bound at residue H51. 126–127 (RR) serves as a coordination point for dUMP. The active-site Nucleophile is the C146. Residues 166-169 (RSCD), N177, and 207-209 (HLY) contribute to the dUMP site. A (6R)-5,10-methylene-5,6,7,8-tetrahydrofolate-binding site is contributed by D169. A (6R)-5,10-methylene-5,6,7,8-tetrahydrofolate-binding site is contributed by A263.

Belongs to the thymidylate synthase family. Bacterial-type ThyA subfamily. Homodimer.

The protein localises to the cytoplasm. It catalyses the reaction dUMP + (6R)-5,10-methylene-5,6,7,8-tetrahydrofolate = 7,8-dihydrofolate + dTMP. The protein operates within pyrimidine metabolism; dTTP biosynthesis. Catalyzes the reductive methylation of 2'-deoxyuridine-5'-monophosphate (dUMP) to 2'-deoxythymidine-5'-monophosphate (dTMP) while utilizing 5,10-methylenetetrahydrofolate (mTHF) as the methyl donor and reductant in the reaction, yielding dihydrofolate (DHF) as a by-product. This enzymatic reaction provides an intracellular de novo source of dTMP, an essential precursor for DNA biosynthesis. In Shewanella sp. (strain MR-4), this protein is Thymidylate synthase.